The sequence spans 263 residues: MTSPLPFVAVVPARLASTRLPNKPLADLGGKPMVVRVAERAREAGAQQVLVASDAQRVLDAVREHGFDAVLTRADHPSGTDRLAEVAAKLGFDDDTIVVNVQGDEPLIDPQLVRDVASHLAAHPSCAIATAAHPIHEAHEVFNPNYVKVVLDAHGVALYFSRAPIPWSRDAYLPHWPNVAAMPAPTCPVYRHIGLYAYRARFLRTYPTLAQAPIEAAEQLEQLRAMWHGERIAVRVTEHAPEAGIDTPADLERVQALFRSRAK.

The protein belongs to the KdsB family.

The protein localises to the cytoplasm. The catalysed reaction is 3-deoxy-alpha-D-manno-oct-2-ulosonate + CTP = CMP-3-deoxy-beta-D-manno-octulosonate + diphosphate. It functions in the pathway nucleotide-sugar biosynthesis; CMP-3-deoxy-D-manno-octulosonate biosynthesis; CMP-3-deoxy-D-manno-octulosonate from 3-deoxy-D-manno-octulosonate and CTP: step 1/1. The protein operates within bacterial outer membrane biogenesis; lipopolysaccharide biosynthesis. Its function is as follows. Activates KDO (a required 8-carbon sugar) for incorporation into bacterial lipopolysaccharide in Gram-negative bacteria. The chain is 3-deoxy-manno-octulosonate cytidylyltransferase from Burkholderia mallei (strain NCTC 10229).